The following is a 499-amino-acid chain: Probable alginate O-acetylase AlgI (499 aa).

Helical transmembrane passes span 7-25 (VFLF…LSPA), 40-62 (YAWW…YWIG), 78-100 (WLTL…NFGV), 115-137 (FVVT…ISYI), 150-172 (NLVD…VLRF), 239-261 (LYFD…GFRF), 312-334 (ILTM…WGAW), 354-373 (IRPL…WVIF), 380-397 (VAWR…WTLS), 407-429 (LQIA…QFYA), and 475-497 (VLLL…FLYF). His-322 is an active-site residue.

Belongs to the membrane-bound acyltransferase family.

Its subcellular location is the cell inner membrane. The protein operates within glycan biosynthesis; alginate biosynthesis. Functionally, together with AlgJ and AlgF, forms an inner membrane complex which probably interacts with the alginate polymerization-transport complex and adds acetyl groups at the O-2 and O-3 positions of mannuronate residues. Acetylation of alginate increases cyst resistance to desiccation. In Azotobacter vinelandii, this protein is Probable alginate O-acetylase AlgI (algI).